We begin with the raw amino-acid sequence, 978 residues long: Receptor like protein 21 (978 aa).

Positions 1-27 are cleaved as a signal peptide; that stretch reads MLLAMEGKLFLCQYLIWVMLLLGQLHG. Over 28 to 930 the chain is Extracellular; the sequence is CTSCIEKERE…EEDDKAAIDM (903 aa). Residues N64, N79, N102, N116, and N155 are each glycosylated (N-linked (GlcNAc...) asparagine). 28 LRR repeats span residues 141–167, 169–189, 190–213, 214–237, 238–262, 264–287, 288–310, 312–335, 337–361, 362–385, 386–409, 410–432, 433–455, 457–480, 481–504, 506–529, 530–553, 554–577, 579–601, 602–625, 627–646, 647–671, 673–693, 694–716, 788–811, 812–835, 837–859, and 860–885; these read LRNLKIMDLSTNYFNYSTFPFLNAATS, TTLILTYNEMDGPFPIKGLKD, LTNLELLDLRANKLNGSMQELIHL, KKLKALDLSSNKFSSSMELQELQN, LINLEVLGLAQNHVDGPIPIEVFCK, KNLRDLDLKGNHFVGQIPLCLGSL, KKLRVLDLSSNQLSGDLPSSFSS, ESLEYLSLSDNNFDGSFSLNPLTN, TNLKLFKLSSRSHTIQVKMESTWQP, NFQLSVVVLRFCSLEKIPSFLLYQ, KKLRLVDLSSNNLSGNIPTWLLTN, NPELEVLQLQNNSFTIFPIPTMV, HNLQIFDFSANNIGKFPDKMDHA, PNLVRLNGSNNGFQGYFPTSIGEM, KNISFLDLSYNNFSGKLPRSFVTG, VSIMFLKLSHNKFSGRFLPRETNF, PSLDVLRMDNNLFTGNIGGGLSNS, TMLRILDMSNNGLSGAIPRWLFEF, YLDYVLISNNFLEGTIPPSLLGM, PFLSFLDLSGNQFSGALPSHVDSE, GIYMFLHNNNFTGPIPDTLL, KSVQILDLRNNKLSGSIPQFDDTQS, NILLLKGNNLTGSIPRELCDL, SNVRLLDLSDNKLNGVIPSCLSN, LRLMYGMDLSNNELSGVIPTELGD, LLKLRTLNLSHNSLLGSIPSSFSK, IDVESLDLSHNMLQGSIPQLLSS, and LTSLAVFDVSSNNLSGIIPQGRQFNT. N-linked (GlcNAc...) asparagine glycosylation occurs at N204. N335 is a glycosylation site (N-linked (GlcNAc...) asparagine). Residues N397 and N420 are each glycosylated (N-linked (GlcNAc...) asparagine). Residues N463, N482, and N492 are each glycosylated (N-linked (GlcNAc...) asparagine). N552 carries N-linked (GlcNAc...) asparagine glycosylation. N636 carries an N-linked (GlcNAc...) asparagine glycan. 2 N-linked (GlcNAc...) asparagine glycosylation sites follow: N681 and N716. The N-linked (GlcNAc...) asparagine glycan is linked to N819. N-linked (GlcNAc...) asparagine glycosylation is present at N872. Residues 902–922 form a disordered region; sequence TSRSCETNKSPEEADNGQEEE. The chain crosses the membrane as a helical span at residues 931–951; sequence MVFYFSTASIYVTALIGVLVL. At 952 to 978 the chain is on the cytoplasmic side; sequence MCFDCPWRRAWLRIVDAFIASAKHVLP.

Belongs to the RLP family.

The protein localises to the cell membrane. This is Receptor like protein 21 from Arabidopsis thaliana (Mouse-ear cress).